Here is a 290-residue protein sequence, read N- to C-terminus: 4-hydroxybenzoate octaprenyltransferase (290 aa).

The next 8 helical transmembrane spans lie at 23-43, 46-66, 99-119, 141-161, 163-183, 213-233, 234-254, and 268-288; these read IGALLLLWPTLWALWVATPGV, LWILAVFVAGVWLMRAAGCVV, LFVVLVLISFLLVLTLNTMTI, LPQVVLGAAFGWSIPMAFAAV, ESVPLSCWLMFLANILWAVAY, LIIGIFQIGVLALMAIIGELN, GLGWGYYWSILVAGALFVYQQ, and AFMNNNYVGLVLFLGLAMSYW.

The protein belongs to the UbiA prenyltransferase family. Mg(2+) is required as a cofactor.

It localises to the cell inner membrane. It carries out the reaction all-trans-octaprenyl diphosphate + 4-hydroxybenzoate = 4-hydroxy-3-(all-trans-octaprenyl)benzoate + diphosphate. It participates in cofactor biosynthesis; ubiquinone biosynthesis. Its function is as follows. Catalyzes the prenylation of para-hydroxybenzoate (PHB) with an all-trans polyprenyl group. Mediates the second step in the final reaction sequence of ubiquinone-8 (UQ-8) biosynthesis, which is the condensation of the polyisoprenoid side chain with PHB, generating the first membrane-bound Q intermediate 3-octaprenyl-4-hydroxybenzoate. This Escherichia coli (strain UTI89 / UPEC) protein is 4-hydroxybenzoate octaprenyltransferase.